Here is a 472-residue protein sequence, read N- to C-terminus: MSSQLGHESSVSSPLSYKTDSNAFTREYAESLDAQDPLRDFRKEFIIPSKVDLKRKTLAIDDSSKDESDPRCIYLCGNSLGVQPRNARKYIDYYLRTWAIKGVTGHFLPHEDQLLPPFVDVDDAGAKLMAPIVGALESEVAVMGTLTANLHFLMASFYRPTQERYKIILEGKAFPSDHYAIESQIRHHNLRPEDAMVLIEPEDRLKPILRTEQILRVIDEHASSTALVLLSGIQFYTGQYFDIEKITAHAQSKGILVGWDCAHAAGNVDLRLHDWNVDFAAWCNYKYLNSGPGGMAALFVHERHGRVDMDKVGSDEEPFRPRLSGWWGGDKKTRFLMNNNFLPQTGAAGFQLSNPSVLDMNAVVASLELFNRTSMAEIRQKSLNATGYLEHLLLNYPADFSTGKRPFSIITPSNPAERGAQLSLLLEPGLLDSVLETLEEHGVVVDERKPDVIRVAPAPLYNTYTEYPTYRT.

Pyridoxal 5'-phosphate contacts are provided by residues leucine 146, threonine 147, 174 to 177, serine 231, aspartate 260, histidine 263, and tyrosine 285; that span reads FPSD. Lysine 286 carries the N6-(pyridoxal phosphate)lysine modification. Pyridoxal 5'-phosphate contacts are provided by tryptophan 326 and asparagine 354.

Belongs to the kynureninase family. As to quaternary structure, homodimer. Requires pyridoxal 5'-phosphate as cofactor.

Its subcellular location is the cytoplasm. It carries out the reaction L-kynurenine + H2O = anthranilate + L-alanine + H(+). The catalysed reaction is 3-hydroxy-L-kynurenine + H2O = 3-hydroxyanthranilate + L-alanine + H(+). It functions in the pathway amino-acid degradation; L-kynurenine degradation; L-alanine and anthranilate from L-kynurenine: step 1/1. The protein operates within cofactor biosynthesis; NAD(+) biosynthesis; quinolinate from L-kynurenine: step 2/3. Catalyzes the cleavage of L-kynurenine (L-Kyn) and L-3-hydroxykynurenine (L-3OHKyn) into anthranilic acid (AA) and 3-hydroxyanthranilic acid (3-OHAA), respectively. The protein is Kynureninase 1 (bna5-1) of Aspergillus niger (strain ATCC MYA-4892 / CBS 513.88 / FGSC A1513).